Here is a 126-residue protein sequence, read N- to C-terminus: Ribosome-binding factor A (126 aa).

The protein belongs to the RbfA family. As to quaternary structure, monomer. Binds 30S ribosomal subunits, but not 50S ribosomal subunits or 70S ribosomes.

Its subcellular location is the cytoplasm. Its function is as follows. One of several proteins that assist in the late maturation steps of the functional core of the 30S ribosomal subunit. Associates with free 30S ribosomal subunits (but not with 30S subunits that are part of 70S ribosomes or polysomes). Required for efficient processing of 16S rRNA. May interact with the 5'-terminal helix region of 16S rRNA. This Histophilus somni (strain 129Pt) (Haemophilus somnus) protein is Ribosome-binding factor A.